The chain runs to 64 residues: Large ribosomal subunit protein uL30 (64 aa).

It belongs to the universal ribosomal protein uL30 family. As to quaternary structure, part of the 50S ribosomal subunit.

The protein is Large ribosomal subunit protein uL30 of Rhodopseudomonas palustris (strain HaA2).